The chain runs to 469 residues: Interstitial collagenase (469 aa).

A signal peptide spans 1–18 (MLSLPLLLLLLWGMGSHS). A propeptide spans 19 to 99 (FPTVPSETRE…PRCGVPDVAE (81 aa)) (activation peptide). Positions 90 to 97 (PRCGVPDV) match the Cysteine switch motif. C92 is a Zn(2+) binding site. The Ca(2+) site is built by D124 and D158. Residues H168 and D170 each coordinate Zn(2+). D175, G176, G178, and N180 together coordinate Ca(2+). H183 lines the Zn(2+) pocket. Ca(2+) is bound by residues R190, G192, and D194. H196 contacts Zn(2+). Positions 198, 199, and 201 each coordinate Ca(2+). A Zn(2+)-binding site is contributed by H218. E219 is an active-site residue. Residues H222 and H228 each contribute to the Zn(2+) site. T274 bears the Phosphothreonine mark. Hemopexin repeat units follow at residues 275-324 (PEVC…WPQL), 325-371 (PNGL…FGFP), 374-422 (VKNI…FPGI), and 423-466 (GDKV…WFNC). C278 and C466 form a disulfide bridge. Ca(2+)-binding residues include D285 and Q329. Phosphotyrosine; by PKDCC is present on Y360. Residues D378 and D427 each coordinate Ca(2+).

It belongs to the peptidase M10A family. Ca(2+) serves as cofactor. The cofactor is Zn(2+). Post-translationally, tyrosine phosphorylated in platelets by PKDCC/VLK.

Its subcellular location is the secreted. It is found in the extracellular space. The protein resides in the extracellular matrix. It carries out the reaction Cleavage of the triple helix of collagen at about three-quarters of the length of the molecule from the N-terminus, at 775-Gly-|-Ile-776 in the alpha1(I) chain. Cleaves synthetic substrates and alpha-macroglobulins at bonds where P1' is a hydrophobic residue.. With respect to regulation, can be activated without removal of the activation peptide. Its function is as follows. Cleaves collagens of types I, II, and III at one site in the helical domain. Also cleaves collagens of types VII and X. This Equus caballus (Horse) protein is Interstitial collagenase (MMP1).